Consider the following 239-residue polypeptide: Pyridoxine 5'-phosphate synthase (239 aa).

Asn7 contributes to the 3-amino-2-oxopropyl phosphate binding site. 9 to 10 lines the 1-deoxy-D-xylulose 5-phosphate pocket; that stretch reads DH. A 3-amino-2-oxopropyl phosphate-binding site is contributed by Arg18. His43 (proton acceptor) is an active-site residue. Arg45 and His50 together coordinate 1-deoxy-D-xylulose 5-phosphate. The active-site Proton acceptor is Glu70. Thr100 provides a ligand contact to 1-deoxy-D-xylulose 5-phosphate. His192 acts as the Proton donor in catalysis. Residues Gly193 and 214–215 each bind 3-amino-2-oxopropyl phosphate; that span reads GH.

The protein belongs to the PNP synthase family. As to quaternary structure, homooctamer; tetramer of dimers.

It is found in the cytoplasm. The enzyme catalyses 3-amino-2-oxopropyl phosphate + 1-deoxy-D-xylulose 5-phosphate = pyridoxine 5'-phosphate + phosphate + 2 H2O + H(+). The protein operates within cofactor biosynthesis; pyridoxine 5'-phosphate biosynthesis; pyridoxine 5'-phosphate from D-erythrose 4-phosphate: step 5/5. Its function is as follows. Catalyzes the complicated ring closure reaction between the two acyclic compounds 1-deoxy-D-xylulose-5-phosphate (DXP) and 3-amino-2-oxopropyl phosphate (1-amino-acetone-3-phosphate or AAP) to form pyridoxine 5'-phosphate (PNP) and inorganic phosphate. In Pelagibacter ubique (strain HTCC1062), this protein is Pyridoxine 5'-phosphate synthase.